Consider the following 76-residue polypeptide: Endothelin-1 (76 aa).

Positions 30 to 44 (CQCASQKDKKCWNFC) are endothelin-like.

Belongs to the endothelin/sarafotoxin family.

It localises to the secreted. Endothelins are endothelium-derived vasoconstrictor peptides. Probable ligand for G-protein coupled receptors EDNRA and EDNRB which activates PTK2B, BCAR1, BCAR3 and, GTPases RAP1 and RHOA cascade in glomerular mesangial cells. Also binds the DEAR/FBXW7-AS1 receptor. Promotes mesenteric arterial wall remodeling via activation of ROCK signaling and subsequent colocalization of NFATC3 with F-actin filaments. NFATC3 then translocates to the nucleus where it subsequently promotes the transcription of the smooth muscle hypertrophy and differentiation marker ACTA2. This is Endothelin-1 (EDN1) from Macaca fascicularis (Crab-eating macaque).